Reading from the N-terminus, the 707-residue chain is Translation initiation factor IF-2 (707 aa).

Over residues 55–80 (LAEKPKEEKQKDQKNHEQEAQDKEEK) the composition is skewed to basic and acidic residues. The segment at 55 to 88 (LAEKPKEEKQKDQKNHEQEAQDKEEKEIEEDSFY) is disordered. Residues 209 to 378 (PRPPIVTVMG…LLVAEMEDLK (170 aa)) enclose the tr-type G domain. The segment at 218-225 (GHVDHGKT) is G1. 218-225 (GHVDHGKT) serves as a coordination point for GTP. The tract at residues 243–247 (GITQH) is G2. The G3 stretch occupies residues 264–267 (DTPG). GTP-binding positions include 264–268 (DTPGH) and 318–321 (NKID). The G4 stretch occupies residues 318–321 (NKID). The interval 354–356 (SAK) is G5.

Belongs to the TRAFAC class translation factor GTPase superfamily. Classic translation factor GTPase family. IF-2 subfamily.

It localises to the cytoplasm. One of the essential components for the initiation of protein synthesis. Protects formylmethionyl-tRNA from spontaneous hydrolysis and promotes its binding to the 30S ribosomal subunits. Also involved in the hydrolysis of GTP during the formation of the 70S ribosomal complex. The protein is Translation initiation factor IF-2 of Caldanaerobacter subterraneus subsp. tengcongensis (strain DSM 15242 / JCM 11007 / NBRC 100824 / MB4) (Thermoanaerobacter tengcongensis).